The primary structure comprises 205 residues: MMLITTHSLPLLLLLLQLWQPLQFQEAYYEDFYFPAYSDKEDFEDFMVEFQSTGPTRPPTKEKVKRRILVNPGMPLGDSGYCNYQIMRKNVYYKYSCVTEHYFLLMQYDELQKTCYNRFVPCKNGIRKCNMSKKLVEGVYCNLTKASNIPLCQYNSFYRRGYVLITCTWQNEMQKLIPYPINDLVEPPEHTKSFLNEDGVFVVPP.

A signal peptide spans 1-24; sequence MMLITTHSLPLLLLLLQLWQPLQF. Intrachain disulfides connect Cys97-Cys152, Cys115-Cys167, and Cys122-Cys129. 2 N-linked (GlcNAc...) asparagine glycosylation sites follow: Asn130 and Asn142.

Belongs to the pancreatic ribonuclease family.

Its subcellular location is the secreted. Functionally, does not exhibit any ribonuclease activity. This Cebus albifrons (White-fronted capuchin) protein is Inactive ribonuclease-like protein 9 (RNASE9).